The sequence spans 103 residues: MSGRDKGGKGLGKGGAKRHRKVLRDNIQGITKPAIRRLARRGGVKRISGLIYEETRGVLKIFLENVIRDAVTYTEHARRKTVTAMDVVYALKRQGRTLYGFGG.

The tract at residues 1-20 (MSGRDKGGKGLGKGGAKRHR) is disordered. Residue S2 is modified to N-acetylserine. N6-acetyllysine occurs at positions 6, 9, 13, 17, and 21. Residues 17 to 21 (KRHRK) mediate DNA binding.

Belongs to the histone H4 family. As to quaternary structure, the nucleosome is a histone octamer containing two molecules each of H2A, H2B, H3 and H4 assembled in one H3-H4 heterotetramer and two H2A-H2B heterodimers. The octamer wraps approximately 147 bp of DNA.

It is found in the nucleus. The protein localises to the chromosome. Its function is as follows. Core component of nucleosome. Nucleosomes wrap and compact DNA into chromatin, limiting DNA accessibility to the cellular machineries which require DNA as a template. Histones thereby play a central role in transcription regulation, DNA repair, DNA replication and chromosomal stability. DNA accessibility is regulated via a complex set of post-translational modifications of histones, also called histone code, and nucleosome remodeling. The polypeptide is Histone H4 variant TH091 (Triticum aestivum (Wheat)).